The following is a 378-amino-acid chain: Queuine tRNA-ribosyltransferase (378 aa).

Catalysis depends on Asp89, which acts as the Proton acceptor. Substrate-binding positions include 89 to 93 (DSGGF), Asp143, Gln187, and Gly214. Positions 245–251 (GVGKPED) are RNA binding. Asp264 functions as the Nucleophile in the catalytic mechanism. Residues 269 to 273 (TRNAR) are RNA binding; important for wobble base 34 recognition. Residues Cys302, Cys304, Cys307, and His333 each coordinate Zn(2+).

The protein belongs to the queuine tRNA-ribosyltransferase family. Homodimer. Within each dimer, one monomer is responsible for RNA recognition and catalysis, while the other monomer binds to the replacement base PreQ1. It depends on Zn(2+) as a cofactor.

It carries out the reaction 7-aminomethyl-7-carbaguanine + guanosine(34) in tRNA = 7-aminomethyl-7-carbaguanosine(34) in tRNA + guanine. Its pathway is tRNA modification; tRNA-queuosine biosynthesis. Its function is as follows. Catalyzes the base-exchange of a guanine (G) residue with the queuine precursor 7-aminomethyl-7-deazaguanine (PreQ1) at position 34 (anticodon wobble position) in tRNAs with GU(N) anticodons (tRNA-Asp, -Asn, -His and -Tyr). Catalysis occurs through a double-displacement mechanism. The nucleophile active site attacks the C1' of nucleotide 34 to detach the guanine base from the RNA, forming a covalent enzyme-RNA intermediate. The proton acceptor active site deprotonates the incoming PreQ1, allowing a nucleophilic attack on the C1' of the ribose to form the product. After dissociation, two additional enzymatic reactions on the tRNA convert PreQ1 to queuine (Q), resulting in the hypermodified nucleoside queuosine (7-(((4,5-cis-dihydroxy-2-cyclopenten-1-yl)amino)methyl)-7-deazaguanosine). The chain is Queuine tRNA-ribosyltransferase from Yersinia enterocolitica serotype O:8 / biotype 1B (strain NCTC 13174 / 8081).